The following is a 272-amino-acid chain: Centromere protein V-like protein 3 (272 aa).

Residues 1–17 (MGRVRNRATAQRRRRKR) show a composition bias toward basic residues. Disordered stretches follow at residues 1–23 (MGRV…DPPA) and 65–95 (RRAR…KELD). Pro residues predominate over residues 77 to 88 (PSAPLPDPPAPA). In terms of domain architecture, CENP-V/GFA spans 133-246 (HTGGCHCGAV…EEVGGGDPGE (114 aa)). Cysteine 137, cysteine 139, cysteine 157, cysteine 159, cysteine 162, cysteine 201, and cysteine 204 together coordinate Zn(2+). The interval 240–272 (GGGDPGEEAAEEHKAIHKTSSQSAPACPREQEQ) is disordered.

Belongs to the Gfa family. It depends on Zn(2+) as a cofactor.

This Homo sapiens (Human) protein is Centromere protein V-like protein 3.